Reading from the N-terminus, the 314-residue chain is Inosine-uridine preferring nucleoside hydrolase (314 aa).

D10 contacts Ca(2+). D14 provides a ligand contact to substrate. Positions 15 and 126 each coordinate Ca(2+). Substrate contacts are provided by N160, E166, and N168. The Proton donor role is filled by H240. D241 is a binding site for Ca(2+).

Belongs to the IUNH family. In terms of assembly, homotetramer. Requires Ca(2+) as cofactor.

It carries out the reaction inosine + H2O = hypoxanthine + D-ribose. The catalysed reaction is uridine + H2O = D-ribose + uracil. Its pathway is purine metabolism; purine nucleoside salvage. Is potently inhibited by immucillin A and immucillin ACAP, which are transition state inhibitors. Catalyzes the hydrolysis of the N-glycosidic bond of all of the commonly occurring purine and pyrimidine nucleosides into ribose and the associated base, but has a preference for inosine and uridine as substrates. Likely functions in purine salvage from the host, a fundamental pathway since protozoan parasites such as L.major are incapable of de novo purine biosynthesis. The chain is Inosine-uridine preferring nucleoside hydrolase (NSNH) from Leishmania major.